Here is a 222-residue protein sequence, read N- to C-terminus: Protein GrpE (222 aa).

The interval 1-64 (MSDQNLGQGS…GEEILSDDDL (64 aa)) is disordered. The segment covering 16–44 (EEPIVRDKRRIDPETGKVREPQDLSHEEL) has biased composition (basic and acidic residues). Residues 54–64 (QGEEILSDDDL) show a composition bias toward acidic residues.

It belongs to the GrpE family. In terms of assembly, homodimer.

It is found in the cytoplasm. Its function is as follows. Participates actively in the response to hyperosmotic and heat shock by preventing the aggregation of stress-denatured proteins, in association with DnaK and GrpE. It is the nucleotide exchange factor for DnaK and may function as a thermosensor. Unfolded proteins bind initially to DnaJ; upon interaction with the DnaJ-bound protein, DnaK hydrolyzes its bound ATP, resulting in the formation of a stable complex. GrpE releases ADP from DnaK; ATP binding to DnaK triggers the release of the substrate protein, thus completing the reaction cycle. Several rounds of ATP-dependent interactions between DnaJ, DnaK and GrpE are required for fully efficient folding. This is Protein GrpE from Leifsonia xyli subsp. xyli (strain CTCB07).